The following is a 202-amino-acid chain: IMP cyclohydrolase (202 aa).

Positions 29 to 52 (VQRDGTVTVEPTPDAPETDNPYIS) are disordered.

Belongs to the archaeal IMP cyclohydrolase family.

The catalysed reaction is IMP + H2O = 5-formamido-1-(5-phospho-D-ribosyl)imidazole-4-carboxamide. It functions in the pathway purine metabolism; IMP biosynthesis via de novo pathway; IMP from 5-formamido-1-(5-phospho-D-ribosyl)imidazole-4-carboxamide: step 1/1. Its function is as follows. Catalyzes the cyclization of 5-formylamidoimidazole-4-carboxamide ribonucleotide to IMP. The protein is IMP cyclohydrolase of Haloarcula marismortui (strain ATCC 43049 / DSM 3752 / JCM 8966 / VKM B-1809) (Halobacterium marismortui).